The sequence spans 255 residues: HTH-type transcriptional regulator SkgA (255 aa).

Residues 3–72 (VYTVKQMARL…LKDIQAALDQ (70 aa)) enclose the HTH merR-type domain. The segment at residues 6–25 (VKQMARLSGVSVRALHHYDA) is a DNA-binding region (H-T-H motif).

Its function is as follows. Regulates the induction of katG (catalase-peroxidase) in stationary phase. The sequence is that of HTH-type transcriptional regulator SkgA (skgA) from Caulobacter vibrioides (strain ATCC 19089 / CIP 103742 / CB 15) (Caulobacter crescentus).